Reading from the N-terminus, the 457-residue chain is Peptidyl-prolyl cis-trans isomerase FKBP5 (457 aa).

Position 1 is an N-acetylmethionine (Met-1). Residues 1–11 show a composition bias toward basic and acidic residues; sequence MTTDEGAKNNE. A disordered region spans residues 1–24; sequence MTTDEGAKNNEESPTATVAEQGED. Position 13 is a phosphoserine (Ser-13). N6-acetyllysine is present on Lys-28. One can recognise a PPIase FKBP-type 1 domain in the interval 42-130; sequence NGEETPMIGD…KIPSNATLFF (89 aa). At Lys-155 the chain carries N6-acetyllysine. In terms of domain architecture, PPIase FKBP-type 2 spans 157–243; that stretch reads EGYSNPNEGA…GIEPNAELIY (87 aa). TPR repeat units follow at residues 268–301, 317–350, and 351–384; these read AAIVKEKGTVYFKGGKYMQAVIQYGKIVSWLEME, LAAFLNLAMCYLKLREYTKAVECCDKALGLDSAN, and EKGLYRRGEAQLLMNEFESAKGDFEKVLEVNPQN. Residues 420-457 form a disordered region; it reads DAKEEANKAMGKKTSEGVTNEKGTDSQAMEEEKPEGHV. Residue Ser-445 is modified to Phosphoserine.

As to quaternary structure, part of a heteromultimeric cytoplasmic complex with HSP90AA1, HSPA1A/HSPA1B and steroid receptors. Upon ligand binding dissociates from the complex and FKBP4 takes its place. Interacts with functionally mature heterooligomeric progesterone receptor complexes along with HSP90 and TEBP. Interacts with NR3C1. Interacts with Akt/AKT1 and PHLPP1; enhancing dephosphorylation and subsequent activation of Akt/AKT1. Interacts with IFI44L; this interaction modulates the kinase activity of IKBKB and IKBKE. Interacts with IKBKB and IKBKE. In terms of processing, acetylation impairs ability to promote interaction between Akt/AKT1 and PHLPP1. Deacetylation by SIRT7 promotes interaction between Akt/AKT1 and PHLPP1, leading to suppress Akt/AKT1 activation. Ubiquitinated, leading to degradation in a proteasome-dependent manner. Deubiquitinated by USP49, leading to stabilization. Widely expressed, enriched in testis compared to other tissues.

It is found in the cytoplasm. It localises to the nucleus. It carries out the reaction [protein]-peptidylproline (omega=180) = [protein]-peptidylproline (omega=0). Inhibited by both FK506 and rapamycin. Functionally, immunophilin protein with PPIase and co-chaperone activities. Component of unligated steroid receptors heterocomplexes through interaction with heat-shock protein 90 (HSP90). Plays a role in the intracellular trafficking of heterooligomeric forms of steroid hormone receptors maintaining the complex into the cytoplasm when unliganded. Acts as a regulator of Akt/AKT1 activity by promoting the interaction between Akt/AKT1 and PHLPP1, thereby enhancing dephosphorylation and subsequent activation of Akt/AKT1. Interacts with IKBKE and IKBKB which facilitates IKK complex assembly leading to increased IKBKE and IKBKB kinase activity, NF-kappa-B activation, and IFN production. The polypeptide is Peptidyl-prolyl cis-trans isomerase FKBP5 (FKBP5) (Homo sapiens (Human)).